A 968-amino-acid polypeptide reads, in one-letter code: Bifunctional glyoxylate cycle protein (968 aa).

Residues 1 to 443 (MSSAAKNFYQ…AVASQDEEIL (443 aa)) form an isocitrate lyase region. The tract at residues 444–968 (SLTAQNVAGD…AYDRLVSEGY (525 aa)) is malate synthase. Residue arginine 601 is the Proton acceptor of the active site. Aspartate 881 (proton donor) is an active-site residue.

This sequence in the N-terminal section; belongs to the isocitrate lyase/PEP mutase superfamily. Isocitrate lyase family. In the C-terminal section; belongs to the malate synthase family. In terms of tissue distribution, intestinal and body wall muscle cells.

It catalyses the reaction D-threo-isocitrate = glyoxylate + succinate. It carries out the reaction glyoxylate + acetyl-CoA + H2O = (S)-malate + CoA + H(+). It functions in the pathway carbohydrate metabolism; glyoxylate cycle; (S)-malate from isocitrate: step 1/2. Its pathway is carbohydrate metabolism; glyoxylate cycle; (S)-malate from isocitrate: step 2/2. This is Bifunctional glyoxylate cycle protein (icl-1) from Caenorhabditis elegans.